Here is a 518-residue protein sequence, read N- to C-terminus: ETHYLENE INSENSITIVE 3-like 2 protein (518 aa).

Residues 37 to 73 (DDLSSDEEMEIEELEKKIWRDKQRLKRLKEMAKNGLG) are a coiled coil. Positions 450-518 (FNHPNDLYRP…GQELPTSWIQ (69 aa)) are disordered. 2 stretches are compositionally biased toward polar residues: residues 475 to 484 (PSPSTLNQNL) and 500 to 518 (GTEN…SWIQ).

Belongs to the EIN3 family. As to quaternary structure, acts as a homodimer to bind the primary ethylene response element.

The protein localises to the nucleus. Functionally, probable transcription factor acting as a positive regulator in the ethylene response pathway. Could bind the primary ethylene response element present in the ETHYLENE-RESPONSE-FACTOR1 promoter. The polypeptide is ETHYLENE INSENSITIVE 3-like 2 protein (EIL2) (Arabidopsis thaliana (Mouse-ear cress)).